A 68-amino-acid chain; its full sequence is Lantibiotic mersacidin (68 aa).

Residues 1–28 are disordered; it reads MSQEAIIRSWKDPFSRENSTQNPAGNPF. A propeptide spanning residues 1–48 is cleaved from the precursor; the sequence is MSQEAIIRSWKDPFSRENSTQNPAGNPFSELKEAQMDKLVGAGDMEAA. Residues 49–50 constitute a cross-link (beta-methyllanthionine (Cys-Thr)); sequence CT. 2 consecutive cross-links (beta-methyllanthionine (Thr-Cys)) follow at residues 52–60 and 61–66; these read TLPGGGGVC and TLTSEC. The segment at residues 63–68 is a cross-link (S-(2-aminovinyl)-3-methyl-D-cysteine (Thr-Cys)); sequence TSECIC. A 2,3-didehydroalanine (Ser) modification is found at S64.

Belongs to the type B lantibiotic family. In terms of processing, maturation of lantibiotics involves the enzymatic conversion of Thr, and Ser into dehydrated AA and the formation of thioether bonds with cysteine. The carboxy-terminal beta-methyllanthionine undergoes decarboxylation. This is followed by membrane translocation and cleavage of the modified precursor.

In terms of biological role, kills a number of Gram-positive bacteria. Acts at the level of cell wall biosynthesis by interfering with bacterial peptidoglycan biosynthesis. Specifically inhibits the conversion of the lipid II intermediate into polymeric nascent glycan strands by transglycosylation. May interact with the peptidoglycan precursor rather than with the enzyme. In Bacillus sp. (strain HIL-Y85/54728), this protein is Lantibiotic mersacidin (mrsA).